A 239-amino-acid chain; its full sequence is uncharacterized protein (239 aa).

This is an uncharacterized protein from Bacillus subtilis (strain 168).